The chain runs to 1066 residues: UPF0182 protein BL1029 (1066 aa).

Residues 12-74 form a disordered region; it reads GNGGDSRRNN…KPASGGSGGS (63 aa). Over residues 44–61 the composition is skewed to low complexity; it reads NAGPSGSSRPPRGPANPR. A run of 7 helical transmembrane segments spans residues 77-97, 126-146, 179-199, 235-255, 282-302, 326-346, and 372-392; these read SKIL…FFGL, LWVA…WLAI, VAVV…NANW, VLAA…VTHV, LGIW…IGVF, VTFI…IWLM, and VTSI…WPVL. The tract at residues 977–1044 is disordered; that stretch reads DSGAAAGDAE…SQSAMKNGDW (68 aa). Residues 989-998 are compositionally biased toward polar residues; the sequence is SGDQSGSDTN. Positions 1003 to 1016 are enriched in low complexity; sequence GTTDGKSDSGSSSD.

This sequence belongs to the UPF0182 family.

The protein localises to the cell membrane. This Bifidobacterium longum (strain NCC 2705) protein is UPF0182 protein BL1029.